The following is a 1415-amino-acid chain: DNA-directed RNA polymerase subunit beta'' (1415 aa).

Zn(2+) contacts are provided by cysteine 217, cysteine 291, cysteine 298, and cysteine 301.

Belongs to the RNA polymerase beta' chain family. RpoC2 subfamily. In terms of assembly, in plastids the minimal PEP RNA polymerase catalytic core is composed of four subunits: alpha, beta, beta', and beta''. When a (nuclear-encoded) sigma factor is associated with the core the holoenzyme is formed, which can initiate transcription. Requires Zn(2+) as cofactor.

It is found in the plastid. Its subcellular location is the chloroplast. The enzyme catalyses RNA(n) + a ribonucleoside 5'-triphosphate = RNA(n+1) + diphosphate. Its function is as follows. DNA-dependent RNA polymerase catalyzes the transcription of DNA into RNA using the four ribonucleoside triphosphates as substrates. This Phaeodactylum tricornutum (strain CCAP 1055/1) protein is DNA-directed RNA polymerase subunit beta''.